A 516-amino-acid chain; its full sequence is NAD(P)H-quinone oxidoreductase chain 4, chloroplastic (516 aa).

The next 14 helical transmembrane spans lie at 4-24 (FPWL…IFLL), 37-57 (LCIC…HFQL), 87-107 (IGPI…AWPV), 111-131 (AQLF…SFSS), 134-154 (LLLF…LLSM), 167-187 (FILY…GIGL), 208-228 (ALEV…LPII), 242-262 (HYST…YGLV), 272-292 (AHCL…IYAA), 305-325 (IAYS…SLSD), 330-350 (GAIL…FLAG), 386-406 (LALP…GIIT), 416-436 (ILIA…SLSM), and 462-482 (LFVS…PDFV).

Belongs to the complex I subunit 4 family.

Its subcellular location is the plastid. The protein resides in the chloroplast thylakoid membrane. It carries out the reaction a plastoquinone + NADH + (n+1) H(+)(in) = a plastoquinol + NAD(+) + n H(+)(out). It catalyses the reaction a plastoquinone + NADPH + (n+1) H(+)(in) = a plastoquinol + NADP(+) + n H(+)(out). This Oenothera argillicola (Appalachian evening primrose) protein is NAD(P)H-quinone oxidoreductase chain 4, chloroplastic.